A 940-amino-acid chain; its full sequence is MSVFNKLMRAGEGKILRKLHRIADQVSSIEEDFVNLSDAELRALTDEYKERYADGESLDDLLPEAFATVREAAKRVLGQRHYDVQMMGGVALHLGYVAEMKTGEGKTLVGTLPAYLNALSGKGVHLITVNDYLAERDSELMGRVHKFLGLSVGCIVANMTPAQRREQYGCDITYGTNNEFGFDYLRDNMAWSKDELVQRGHNFAVVDEVDSILVDEARTPLIISGPADQPPSGTADFAKLVTRLTKGEAGNQLKGIEETGDYEVDEKKRTVAIHEAGVAKVEDWLGIDNLYESVNTPLVGYLNNAIKAKELFKKDKDYVVIDGEVMIVDEHTGRILAGRRYNEGMHQAIEAKEGVDIKDENQTLATITLQQNFFRLYDKLSGMTGTAMTEAAEFHQIYKLGVVPIPTNRPMVRADQSDLIYRTEVAKFAAVVDDIAEKHEKGQPILVGTTSVEKSEYLSQQLSKRGVQHEVLNAKQHDREATIVAQAGRKGAVTVATNMAGRGTDIKLGGNPDDLAEAELRQRGLDPVENVEEWAAALPAALETAEQAVKAEFEEVKDLGGLYVLGTERHESRRIDNQLRGRSGRQGDPGESRFYLSLGDDLMRLFKAQMVERVMSMANVPDDVPIENKMVTRAIASAQSQVEQQNFETRKNVLKYDEVLNRQREVIYGERRRVLEGEDLQEQIRHFMDDTIDDYIRQETAEGFAEEWDLDRLWGAFKQLYPVKVTVDELEEAAGDLAGVTAEFIAESVKNDIHEQYEERENTLGSDIMRELEPRWVLSVLDRKWREHLYEMDYLQEGIGLRAMAQKDPLVEYQREGFDMFNAMMEGIKEESVGYLFNLEVQVEQQVEEVPVQDGAERPSLEKEGATAAPQIRAKGLEAPQRPDRLHFSAPTVDGEGGVVEGDFANDEATGDTRSGSADGMTRADAARRRKGGGGRRRKK.

Residues Q85, 103 to 107, and D505 contribute to the ATP site; that span reads GEGKT. The interval 851-940 is disordered; sequence PVQDGAERPS…KGGGGRRRKK (90 aa). Over residues 855 to 865 the composition is skewed to basic and acidic residues; the sequence is GAERPSLEKEG. Over residues 928 to 940 the composition is skewed to basic residues; that stretch reads RRRKGGGGRRRKK.

This sequence belongs to the SecA family. Monomer and homodimer. Part of the essential Sec protein translocation apparatus which comprises SecA, SecYEG and auxiliary proteins SecDF. Other proteins may also be involved.

Its subcellular location is the cell membrane. It is found in the cytoplasm. The enzyme catalyses ATP + H2O + cellular proteinSide 1 = ADP + phosphate + cellular proteinSide 2.. In terms of biological role, part of the Sec protein translocase complex. Interacts with the SecYEG preprotein conducting channel. Has a central role in coupling the hydrolysis of ATP to the transfer of proteins into and across the cell membrane, serving as an ATP-driven molecular motor driving the stepwise translocation of polypeptide chains across the membrane. This Streptomyces griseus protein is Protein translocase subunit SecA.